The primary structure comprises 188 residues: Holliday junction branch migration complex subunit RuvA (188 aa).

Residues 1–64 (MIAGISGRVL…QDGITLYGFS (64 aa)) form a domain I region. The domain II stretch occupies residues 65 to 143 (NERKKELFLS…SAGIKDMRIY (79 aa)). Residue Tyr143 is a region of interest, flexible linker. The tract at residues 143-188 (YHESLEALISLGYPEKQAREAVKHVYREGMKTSELIKEALKFLSQR) is domain III.

It belongs to the RuvA family. As to quaternary structure, homotetramer. Forms an RuvA(8)-RuvB(12)-Holliday junction (HJ) complex. HJ DNA is sandwiched between 2 RuvA tetramers; dsDNA enters through RuvA and exits via RuvB. An RuvB hexamer assembles on each DNA strand where it exits the tetramer. Each RuvB hexamer is contacted by two RuvA subunits (via domain III) on 2 adjacent RuvB subunits; this complex drives branch migration. In the full resolvosome a probable DNA-RuvA(4)-RuvB(12)-RuvC(2) complex forms which resolves the HJ.

The protein localises to the cytoplasm. The RuvA-RuvB-RuvC complex processes Holliday junction (HJ) DNA during genetic recombination and DNA repair, while the RuvA-RuvB complex plays an important role in the rescue of blocked DNA replication forks via replication fork reversal (RFR). RuvA specifically binds to HJ cruciform DNA, conferring on it an open structure. The RuvB hexamer acts as an ATP-dependent pump, pulling dsDNA into and through the RuvAB complex. HJ branch migration allows RuvC to scan DNA until it finds its consensus sequence, where it cleaves and resolves the cruciform DNA. This chain is Holliday junction branch migration complex subunit RuvA, found in Thermotoga petrophila (strain ATCC BAA-488 / DSM 13995 / JCM 10881 / RKU-1).